The chain runs to 117 residues: Ig kappa chain V region 12F2 (117 aa).

The signal sequence occupies residues 1-6 (LPGARC). The interval 7 to 29 (AYDMTQTPASVEVAVGGTVTIKC) is framework-1. Cys29 and Cys86 are oxidised to a cystine. Residues 30-40 (QASQSISTYLS) are complementarity-determining-1. A framework-2 region spans residues 41 to 55 (WYQQKPGQRPKLLIY). The interval 56-62 (RASTLAS) is complementarity-determining-2. The tract at residues 63-94 (GVSSRFKGSGSGTEFTLTISGVECADAATYYC) is framework-3. The tract at residues 95–106 (QQGWSSSNVENV) is complementarity-determining-3. The interval 107–116 (FGGGTEVVVK) is framework-4.

The chain is Ig kappa chain V region 12F2 from Oryctolagus cuniculus (Rabbit).